Consider the following 418-residue polypeptide: MTIAEKIRKIAADARQASLAMARLSSAAKNELLMNMAMALINNTPHLVEENAKDLSAGEKKGLSAAMLDRLMLDEARIKAMADGLREVVGLPDPVGEVTRMWKRPNELTVGKMRIPLGVIGIIYESRPNVTADAAALCLKAGNAVVLRGGSEAIYSNVAIARILQDEMRKDGIPVAALSVIPFVEREGVTEMLKQEEFIDVIIPRGGESLIRFVVEHSKIPVIKHYKGVCHVFVDASADFDMAERIIVNSKTQRPGVCNALETLLIHKDVAETFIPRIFETLAALKVEMRGDDCFRQFAPGATPATEEDWHAEYLDLILAARVVDDMDEAIAHINKYGSLHTEAIITSDYGNSQRFLREVNSSVVLVNASTRFSDGNQLGLGAEIGISTTKLHSFGPMGLEDLTTTKFIVYGEGQVRP.

This sequence belongs to the gamma-glutamyl phosphate reductase family.

It localises to the cytoplasm. The catalysed reaction is L-glutamate 5-semialdehyde + phosphate + NADP(+) = L-glutamyl 5-phosphate + NADPH + H(+). It participates in amino-acid biosynthesis; L-proline biosynthesis; L-glutamate 5-semialdehyde from L-glutamate: step 2/2. Functionally, catalyzes the NADPH-dependent reduction of L-glutamate 5-phosphate into L-glutamate 5-semialdehyde and phosphate. The product spontaneously undergoes cyclization to form 1-pyrroline-5-carboxylate. In Geotalea uraniireducens (strain Rf4) (Geobacter uraniireducens), this protein is Gamma-glutamyl phosphate reductase.